We begin with the raw amino-acid sequence, 393 residues long: ATP phosphoribosyltransferase regulatory subunit (393 aa).

It belongs to the class-II aminoacyl-tRNA synthetase family. HisZ subfamily. Heteromultimer composed of HisG and HisZ subunits.

The protein resides in the cytoplasm. Its pathway is amino-acid biosynthesis; L-histidine biosynthesis; L-histidine from 5-phospho-alpha-D-ribose 1-diphosphate: step 1/9. Its function is as follows. Required for the first step of histidine biosynthesis. May allow the feedback regulation of ATP phosphoribosyltransferase activity by histidine. The chain is ATP phosphoribosyltransferase regulatory subunit from Synechococcus sp. (strain RCC307).